Consider the following 136-residue polypeptide: MLQPKQTKFRKMHKGRNRGLANGTDVIFGHFGLKASGRCRLTARQIESARRAMTRCIKRQGKIWIRVFPDKPITQKPLEVRMGKGKGNVEYWVDLIQPGKVLFEMGDVSEEIAREAFKLAAAKLPVGTTFVTKTVM.

The protein belongs to the universal ribosomal protein uL16 family. In terms of assembly, part of the 50S ribosomal subunit.

Functionally, binds 23S rRNA and is also seen to make contacts with the A and possibly P site tRNAs. The protein is Large ribosomal subunit protein uL16 of Hamiltonella defensa subsp. Acyrthosiphon pisum (strain 5AT).